The primary structure comprises 471 residues: 3-isopropylmalate dehydratase large subunit (471 aa).

[4Fe-4S] cluster contacts are provided by Cys-351, Cys-412, and Cys-415.

This sequence belongs to the aconitase/IPM isomerase family. LeuC type 1 subfamily. As to quaternary structure, heterodimer of LeuC and LeuD. [4Fe-4S] cluster is required as a cofactor.

It catalyses the reaction (2R,3S)-3-isopropylmalate = (2S)-2-isopropylmalate. Its pathway is amino-acid biosynthesis; L-leucine biosynthesis; L-leucine from 3-methyl-2-oxobutanoate: step 2/4. Its function is as follows. Catalyzes the isomerization between 2-isopropylmalate and 3-isopropylmalate, via the formation of 2-isopropylmaleate. The polypeptide is 3-isopropylmalate dehydratase large subunit (Hahella chejuensis (strain KCTC 2396)).